The sequence spans 652 residues: Proline-rich receptor-like protein kinase PERK1 (652 aa).

Residues 1-137 (MSTAPSPGTT…PPSDSSDGLS (137 aa)) are disordered. Topologically, residues 1–139 (MSTAPSPGTT…SDSSDGLSTG (139 aa)) are extracellular. Residues 8-19 (GTTPSPSPPSPP) show a composition bias toward pro residues. N-linked (GlcNAc...) asparagine glycans are attached at residues N21 and N50. Residues 26–112 (TPPPAASSPP…PSPNQGPPNT (87 aa)) are compositionally biased toward pro residues. Residues 113 to 137 (PSGSTPRTPSNTKPSPPSDSSDGLS) show a composition bias toward low complexity. The helical transmembrane segment at 140-160 (VVVGIAIGGVAILVILTLICL) threads the bilayer. At 161-652 (LCKKKRRRRH…TGQGYSGPSL (492 aa)) the chain is on the cytoplasmic side. The interval 169-251 (RHDDEAAYYV…GGSDYSDLPV (83 aa)) is disordered. Residues 203–213 (NASRPSDNHVV) are compositionally biased toward polar residues. Residues 216–236 (LPPPKPPSPPRKPPPPPPPPA) show a composition bias toward pro residues. At T269 the chain carries Phosphothreonine. Residues 280–559 (FSEANLLGQG…VRALEGNVSL (280 aa)) form the Protein kinase domain. Residues 286–294 (LGQGGFGYV) and K308 contribute to the ATP site. Y353 bears the Phosphotyrosine mark. The Proton acceptor role is filled by D404. A phosphoserine mark is found at S408 and S437. Phosphothreonine occurs at positions 438 and 443. At Y451 the chain carries Phosphotyrosine. Over residues 605–616 (YGTTGEYSNPTS) the composition is skewed to polar residues. The disordered stretch occupies residues 605 to 652 (YGTTGEYSNPTSDYGLYPSGSSSEGQATREMEMGKIKKTGQGYSGPSL).

Belongs to the protein kinase superfamily. Ser/Thr protein kinase family. As to expression, mostly expressed in inflorescence bolt, flower buds and siliques, and, to a lower extent, in roots, seedlings and leaves.

The protein resides in the cell membrane. It catalyses the reaction L-seryl-[protein] + ATP = O-phospho-L-seryl-[protein] + ADP + H(+). The catalysed reaction is L-threonyl-[protein] + ATP = O-phospho-L-threonyl-[protein] + ADP + H(+). The chain is Proline-rich receptor-like protein kinase PERK1 (PERK1) from Arabidopsis thaliana (Mouse-ear cress).